A 72-amino-acid polypeptide reads, in one-letter code: Large ribosomal subunit protein bL31 (72 aa).

It belongs to the bacterial ribosomal protein bL31 family. Type A subfamily. In terms of assembly, part of the 50S ribosomal subunit.

Its function is as follows. Binds the 23S rRNA. This chain is Large ribosomal subunit protein bL31, found in Maricaulis maris (strain MCS10) (Caulobacter maris).